The sequence spans 69 residues: DNA-directed RNA polymerase subunit omega (69 aa).

It belongs to the RNA polymerase subunit omega family. The RNAP catalytic core consists of 2 alpha, 1 beta, 1 beta' and 1 omega subunit. When a sigma factor is associated with the core the holoenzyme is formed, which can initiate transcription.

The enzyme catalyses RNA(n) + a ribonucleoside 5'-triphosphate = RNA(n+1) + diphosphate. Functionally, promotes RNA polymerase assembly. Latches the N- and C-terminal regions of the beta' subunit thereby facilitating its interaction with the beta and alpha subunits. The sequence is that of DNA-directed RNA polymerase subunit omega from Symbiobacterium thermophilum (strain DSM 24528 / JCM 14929 / IAM 14863 / T).